Consider the following 249-residue polypeptide: Enolase-phosphatase E1 (249 aa).

Belongs to the HAD-like hydrolase superfamily. MasA/MtnC family. As to quaternary structure, monomer. Requires Mg(2+) as cofactor.

It catalyses the reaction 5-methylsulfanyl-2,3-dioxopentyl phosphate + H2O = 1,2-dihydroxy-5-(methylsulfanyl)pent-1-en-3-one + phosphate. It functions in the pathway amino-acid biosynthesis; L-methionine biosynthesis via salvage pathway; L-methionine from S-methyl-5-thio-alpha-D-ribose 1-phosphate: step 3/6. Its pathway is amino-acid biosynthesis; L-methionine biosynthesis via salvage pathway; L-methionine from S-methyl-5-thio-alpha-D-ribose 1-phosphate: step 4/6. Functionally, bifunctional enzyme that catalyzes the enolization of 2,3-diketo-5-methylthiopentyl-1-phosphate (DK-MTP-1-P) into the intermediate 2-hydroxy-3-keto-5-methylthiopentenyl-1-phosphate (HK-MTPenyl-1-P), which is then dephosphorylated to form the acireductone 1,2-dihydroxy-3-keto-5-methylthiopentene (DHK-MTPene). This Synechococcus sp. (strain CC9605) protein is Enolase-phosphatase E1.